Reading from the N-terminus, the 426-residue chain is O-methyltransferase pyvH (426 aa).

S-adenosyl-L-methionine contacts are provided by residues 258–259, aspartate 281, 308–309, and arginine 323; these read GG and DF. Residue histidine 327 is the Proton acceptor of the active site.

Belongs to the class I-like SAM-binding methyltransferase superfamily. Cation-independent O-methyltransferase family.

It functions in the pathway secondary metabolite biosynthesis. Its function is as follows. O-methyltransferase; part of the gene cluster that mediates the biosynthesis of pyranoviolin A, a pyranonigrin analog with a C-3 methoxy group. Initially, the PKS portion of pyvA synthesizes C-10 carbon chain from 5 molecules of malonyl-CoA, which is then condensed with the thiolation (T) domain-bound glycine activated by the adenylation (A) domain. The subsequent chain release by Dieckmann condensation (DKC) could be catalyzed by the TE domain present at the C-terminus of pyvA and/or the alpha/beta hydrolase pyvD, installing the tetramic acid moiety. The FAD-dependent monooxygenase pyvC next epoxidizes one of the olefins of the polyketide part, and the epoxide ring-opening induces the dihydro-gamma-pyrone ring formation. The cytochrome P450 monooxygeanse pyvB would be responsible for the 2 consecutive reactions, in which the dihydro-gamma-pyrone is oxidized to gamma-pyrone and C-7 is hydroxylated to yield pyranonigrin F. Finally, the O-methyltransferase pyvH methylates the C-3 hydroxy group to complete the biosynthesis. The sequence is that of O-methyltransferase pyvH from Aspergillus violaceofuscus (strain CBS 115571).